The primary structure comprises 279 residues: Thymidylate synthase (279 aa).

133–134 (RR) is a binding site for dUMP. The Nucleophile role is filled by Cys-154. Residues 178–181 (RSND), Asn-189, and 219–221 (HIY) contribute to the dUMP site. Asp-181 lines the (6R)-5,10-methylene-5,6,7,8-tetrahydrofolate pocket. Ala-278 contributes to the (6R)-5,10-methylene-5,6,7,8-tetrahydrofolate binding site.

This sequence belongs to the thymidylate synthase family. Bacterial-type ThyA subfamily. Homodimer.

The protein resides in the cytoplasm. It carries out the reaction dUMP + (6R)-5,10-methylene-5,6,7,8-tetrahydrofolate = 7,8-dihydrofolate + dTMP. The protein operates within pyrimidine metabolism; dTTP biosynthesis. Functionally, catalyzes the reductive methylation of 2'-deoxyuridine-5'-monophosphate (dUMP) to 2'-deoxythymidine-5'-monophosphate (dTMP) while utilizing 5,10-methylenetetrahydrofolate (mTHF) as the methyl donor and reductant in the reaction, yielding dihydrofolate (DHF) as a by-product. This enzymatic reaction provides an intracellular de novo source of dTMP, an essential precursor for DNA biosynthesis. The sequence is that of Thymidylate synthase from Streptococcus suis (strain 05ZYH33).